Consider the following 964-residue polypeptide: Ankyrin repeat and LEM domain-containing protein 2 (964 aa).

Topologically, residues 1 to 7 (MLWQRLA) are extracellular. The chain crosses the membrane as a helical; Signal-anchor for type III membrane protein span at residues 8 to 28 (VVEWAALAWELLGASVLFIAV). Residues 29–964 (RWLVRRLEKR…VAHVARLAAL (936 aa)) lie on the Cytoplasmic side of the membrane. Residues 71-115 (MARLKLLNPDDLRKEVMKAGLKCGPITSTTRFIFEKKLAQALLEQ) enclose the LEM domain. Residues Ser-266 and Ser-275 each carry the phosphoserine modification. An ANK repeat occupies 419–448 (GFDTPLHFACKFGNVDVVNVLSSHPLIVKN). Residues Ser-503, Ser-519, Ser-535, Ser-675, and Ser-916 each carry the phosphoserine modification. Residues 666–688 (NQQNTVPSQSQPTTDKFQTSKSG) show a composition bias toward polar residues. A disordered region spans residues 666 to 726 (NQQNTVPSQS…PLNHRTADGR (61 aa)). A disordered region spans residues 920–949 (SPAGSSPSKPGHTSSSSGLHSPGRYSPAHG). The segment covering 923–937 (GSSPSKPGHTSSSSG) has biased composition (low complexity). Ser-940 is subject to Phosphoserine.

The protein belongs to the ANKLE2 family. In terms of assembly, interacts with BAF/BANF1. Interacts with protein phosphatase 2A (PP2A) components PPP2C (PPP2CA or PPP2CB) and PPP2R1A.

It localises to the endoplasmic reticulum membrane. Functionally, involved in mitotic nuclear envelope reassembly by promoting dephosphorylation of BAF/BANF1 during mitotic exit. Coordinates the control of BAF/BANF1 dephosphorylation by inhibiting VRK1 kinase and promoting dephosphorylation of BAF/BANF1 by protein phosphatase 2A (PP2A), thereby facilitating nuclear envelope assembly. May regulate nuclear localization of VRK1 in non-dividing cells. It is unclear whether it acts as a real PP2A regulatory subunit or whether it is involved in recruitment of the PP2A complex. Involved in brain development. This Mus musculus (Mouse) protein is Ankyrin repeat and LEM domain-containing protein 2 (Ankle2).